A 388-amino-acid chain; its full sequence is Mannitol-1-phosphate 5-dehydrogenase (388 aa).

5-16 (AVHFGGGNIGRG) serves as a coordination point for NAD(+). Residue Lys-213 is part of the active site.

This sequence belongs to the mannitol dehydrogenase family. In terms of assembly, monomer.

It catalyses the reaction D-mannitol 1-phosphate + NAD(+) = beta-D-fructose 6-phosphate + NADH + H(+). Catalyzes the NAD(H)-dependent interconversion of D-fructose 6-phosphate and D-mannitol 1-phosphate in the mannitol metabolic pathway. This is Mannitol-1-phosphate 5-dehydrogenase from Penicillium rubens (strain ATCC 28089 / DSM 1075 / NRRL 1951 / Wisconsin 54-1255) (Penicillium chrysogenum).